A 707-amino-acid polypeptide reads, in one-letter code: Nucleolin (707 aa).

Positions Met1–Pro308 are disordered. N6-acetyllysine is present on residues Lys9, Lys15, and Lys16. Over residues Val24–Val46 the composition is skewed to acidic residues. Residues Ser28, Ser34, Ser40, and Ser41 each carry the phosphoserine modification. Over residues Ala56–Thr92 the composition is skewed to low complexity. Residues Thr58 to Val65 form repeat 1. Residues Thr58–Lys135 form an 8 X 8 AA tandem repeats of X-T-P-X-K-K-X-X region. Ser67 carries the post-translational modification Phosphoserine. A phosphothreonine mark is found at Thr69, Thr76, Thr84, and Thr92. 3 repeat units span residues Pro75–Ala82, Val83–Val90, and Ala91–Ile98. An N6-acetyllysine modification is found at Lys96. Thr99 is modified (phosphothreonine). The 5; truncated repeat unit spans residues Thr99–Ile104. At Lys102 the chain carries N6-acetyllysine. Residues Pro105–Ala112 form repeat 6. At Thr106 the chain carries Phosphothreonine. N6-acetyllysine is present on residues Lys109 and Lys116. 2 tandem repeats follow at residues Pro120 to Ala127 and Ala128 to Lys135. Thr121 is subject to Phosphothreonine. A compositionally biased stretch (low complexity) spans Thr121–Gly137. Lys124 is modified (N6-acetyllysine). Residues Ser145 and Ser157 each carry the phosphoserine modification. Residues Ser145–Glu170 are compositionally biased toward acidic residues. Over residues Pro179–Ala188 the composition is skewed to low complexity. 2 positions are modified to phosphoserine: Ser189 and Ser212. Residues Ser189–Met217 show a composition bias toward acidic residues. Thr220 is subject to Phosphothreonine. A compositionally biased stretch (acidic residues) spans Glu241–Glu273. Positions Met286–Gly302 are enriched in basic and acidic residues. Lys299 is covalently cross-linked (Glycyl lysine isopeptide (Lys-Gly) (interchain with G-Cter in SUMO1); alternate). A Glycyl lysine isopeptide (Lys-Gly) (interchain with G-Cter in SUMO2); alternate cross-link involves residue Lys299. Ser303 carries the post-translational modification Phosphoserine. RRM domains lie at Phe309–Gly385 and Arg395–Glu468. Position 320 is an N6-acetyllysine (Lys320). Residue Lys326 forms a Glycyl lysine isopeptide (Lys-Gly) (interchain with G-Cter in SUMO1); alternate linkage. Lys326 is covalently cross-linked (Glycyl lysine isopeptide (Lys-Gly) (interchain with G-Cter in SUMO2); alternate). Lys350 is subject to N6-acetyllysine. Phosphoserine is present on Ser358. A Phosphothreonine modification is found at Thr369. Lys372 participates in a covalent cross-link: Glycyl lysine isopeptide (Lys-Gly) (interchain with G-Cter in SUMO2). Lys379 participates in a covalent cross-link: Glycyl lysine isopeptide (Lys-Gly) (interchain with G-Cter in SUMO2); alternate. At Lys379 the chain carries N6-acetyllysine; alternate. An N6-acetyllysine modification is found at Lys400. Ser403 carries the post-translational modification Phosphoserine. A Phosphothreonine modification is found at Thr407. N6-acetyllysine is present on residues Lys429 and Lys446. Ser460 and Ser462 each carry phosphoserine. 2 positions are modified to N6-acetyllysine: Lys469 and Lys478. RRM domains follow at residues Lys487–Ser561 and Lys569–Pro644. Lys514 is covalently cross-linked (Glycyl lysine isopeptide (Lys-Gly) (interchain with G-Cter in SUMO2); alternate). Lys514 is modified (N6-acetyllysine; alternate). N6-acetyllysine is present on residues Lys522 and Lys569. Lys574 participates in a covalent cross-link: Glycyl lysine isopeptide (Lys-Gly) (interchain with G-Cter in SUMO2); alternate. The residue at position 574 (Lys574) is an N6-acetyllysine; alternate. The residue at position 577 (Ser577) is a Phosphoserine. A Glycyl lysine isopeptide (Lys-Gly) (interchain with G-Cter in SUMO1); alternate cross-link involves residue Lys586. Lys586 is covalently cross-linked (Glycyl lysine isopeptide (Lys-Gly) (interchain with G-Cter in SUMO2); alternate). Ser588 and Ser616 each carry phosphoserine. Lys621 participates in a covalent cross-link: Glycyl lysine isopeptide (Lys-Gly) (interchain with G-Cter in SUMO2). The disordered stretch occupies residues Leu639–Glu707. Position 643 is an N6-acetyllysine (Lys643). Positions Glu647–Asp696 are enriched in gly residues. Asymmetric dimethylarginine occurs at positions 653, 657, 663, 667, 670, 676, 678, 684, and 688. Arg691 bears the Asymmetric dimethylarginine; alternate mark. Omega-N-methylarginine; alternate is present on Arg691.

In terms of assembly, identified in a IGF2BP1-dependent mRNP granule complex containing untranslated mRNAs. Component of the SWAP complex that consists of NPM1, NCL/nucleolin, PARP1 and SWAP70. Component of a complex which is at least composed of HTATSF1/Tat-SF1, the P-TEFb complex components CDK9 and CCNT1, RNA polymerase II, SUPT5H, and NCL/nucleolin. Interacts with AICDA. Interacts with APTX. Interacts with C1QBP. Interacts with ERBB4. Interacts (via C-terminus) with FMR1 isoform 6 (via N-terminus). Interacts with GZF1; this interaction is important for nucleolar localization of GZF1. Interacts with NSUN2. Interacts with NVL. Interacts (via N-terminus domain) with SETX. Interacts (via RRM1 and C-terminal RRM4/Arg/Gly-rich domains) with TERT; the interaction is important for nucleolar localization of TERT. Interacts with WDR46. Interacts with ZFP36. Interacts with LRRC34. Interacts with RRP1B. Interacts with HNRNPU; this interaction occurs during mitosis. Interacts with RIOK1; RIOK1 recruits NCL to PRMT5 for symmetrically methylation. Interacts with ZBTB7B. Interacts with MDK; this interaction promotes NCL clustering and lateral movements of this complex into lipid rafts leading to MDK internalization. Interacts with HDGF. Interacts with ALKBH2. Interacts with IGFBP5; this interaction is necessary for IGFBP5 localization to the nucleus. Interacts with DDX24 (when ubiquitinated); this interaction may be important during ribosome biogenesis. In terms of processing, some glutamate residues are glycylated by TTLL8. This modification occurs exclusively on glutamate residues and results in a glycine chain on the gamma-carboxyl group. Symmetrically methylated by PRMT5. Expressed in B-cells that have been induced to switch to various Ig isotypes.

The protein resides in the nucleus. The protein localises to the nucleolus. Its subcellular location is the cytoplasm. Its function is as follows. Nucleolin is the major nucleolar protein of growing eukaryotic cells. It is found associated with intranucleolar chromatin and pre-ribosomal particles. It induces chromatin decondensation by binding to histone H1. It is thought to play a role in pre-rRNA transcription and ribosome assembly. May play a role in the process of transcriptional elongation. Binds RNA oligonucleotides with 5'-UUAGGG-3' repeats more tightly than the telomeric single-stranded DNA 5'-TTAGGG-3' repeats. This is Nucleolin (Ncl) from Mus musculus (Mouse).